The following is a 112-amino-acid chain: Protein new-glue 2 (112 aa).

The N-terminal stretch at 1 to 24 (MKITVVLVLLATFLGCVMIHESEA) is a signal peptide. Low complexity predominate over residues 24–69 (ASTTTTSTSASATTTTSASATTTTSASATTTTSASATTTTASPSSS). The disordered stretch occupies residues 24 to 112 (ASTTTTSTSA…RSSRNRRSEE (89 aa)). A run of 4 repeats spans residues 31–38 (TSASATTT), 39–46 (TSASATTT), 47–54 (TSASATTT), and 55–62 (TSASATTT). The interval 31-62 (TSASATTTTSASATTTTSASATTTTSASATTT) is 4 X 8 AA tandem repeats of T-S-A-S-A-T-T-T. Positions 70-112 (SKKKTVTHYKRKVKRPKKVRKITRRRGLRSRNGRSSRNRRSEE) are enriched in basic residues.

This sequence to NG-1, also to SGS-3. Salivary gland specific.

The protein localises to the secreted. The protein is Protein new-glue 2 (ng2) of Drosophila melanogaster (Fruit fly).